The sequence spans 531 residues: MPKLKVKAGKGKKGKRKKAGKNEHRLDKESEVERARSNAALWEARLKVTEFSRVEYRDAARSLAQNNEDLTKQQYKLEKDMVEVIGFLKKQDLEKDELIEKLQQNLIAQKKSAQDEREKLVELYSKQIAHLEENYSQKTNEMQIIQSEFKLMREFRRQKVELEKELDEVKESLWRANQDHKETLARMERRFFEEKQRLEKEAEKKIMMLAEKAHSEAIIQLDEARKSVFKENVRLKEAFSYHLKEMKDIKKSKKMQEDAKLHLLQEKETNDLLVQEKVSQVSQKKVQIQELQQNVKALECALERMTMEMEKDAQGKEHQALLQEQAGNVELQKLQKVLHMKEREMNRIKKLARNILEERTEVESFFLEALWQVKQEIATSRNYYRQVAQSAYTSKMIQASLGKDQYPKIRTFHNKEHSTNDVSHDLSEAEKWTHIQAGKVDIGDLTWEQKEKVLRLLFAKMNGFQSRKSPGLKPSPPADVSSIKEKEINTSNLEEKPEESSSTFITQSIPELPAPSLVLPHIQTGRCQVTG.

Basic residues predominate over residues 1-19; it reads MPKLKVKAGKGKKGKRKKA. The disordered stretch occupies residues 1-32; it reads MPKLKVKAGKGKKGKRKKAGKNEHRLDKESEV. Residues 20–32 are compositionally biased toward basic and acidic residues; that stretch reads GKNEHRLDKESEV. Coiled coils occupy residues 26-213 and 274-365; these read LDKE…AEKA and VQEK…VESF. The interval 465–505 is disordered; it reads QSRKSPGLKPSPPADVSSIKEKEINTSNLEEKPEESSSTFI. Positions 482–499 are enriched in basic and acidic residues; sequence SIKEKEINTSNLEEKPEE.

This sequence belongs to the BBOF1 family. In terms of tissue distribution, multiciliated cells.

It localises to the cytoplasm. It is found in the cytoskeleton. The protein resides in the cilium basal body. Basal body protein required in multiciliate cells to align and maintain cilia orientation in response to flow. May act by mediating a maturation step that stabilizes and aligns cilia orientation. Not required to respond to planar cell polarity (PCP) or flow-based orientation cues. In Xenopus laevis (African clawed frog), this protein is Basal body-orientation factor 1 (ccdc176).